The chain runs to 148 residues: Cytochrome c oxidase subunit 4, mitochondrial (148 aa).

A mitochondrion-targeting transit peptide spans 1–24 (MFALRSIRSATKAFQTTSIVSQRG).

In terms of assembly, slime mold cytochrome c oxidase consists of at least seven different polypeptides species, subunits I, II, III, IV, V, VI, and VIIe/s in order of MW.

Its subcellular location is the mitochondrion inner membrane. It catalyses the reaction 4 Fe(II)-[cytochrome c] + O2 + 8 H(+)(in) = 4 Fe(III)-[cytochrome c] + 2 H2O + 4 H(+)(out). This protein is one of the nuclear-coded polypeptide chains of cytochrome c oxidase, the terminal oxidase in mitochondrial electron transport. The polypeptide is Cytochrome c oxidase subunit 4, mitochondrial (cxdA) (Dictyostelium discoideum (Social amoeba)).